The following is a 468-amino-acid chain: Probable Xaa-Pro aminopeptidase PEPP (468 aa).

D264, D275, E398, and E438 together coordinate Mn(2+).

Belongs to the peptidase M24B family. Mn(2+) is required as a cofactor.

The catalysed reaction is Release of any N-terminal amino acid, including proline, that is linked to proline, even from a dipeptide or tripeptide.. Functionally, catalyzes the removal of a penultimate prolyl residue from the N-termini of peptides. This Paracoccidioides lutzii (strain ATCC MYA-826 / Pb01) (Paracoccidioides brasiliensis) protein is Probable Xaa-Pro aminopeptidase PEPP (PEPP).